A 210-amino-acid chain; its full sequence is Large ribosomal subunit protein uL4 (210 aa).

Positions 56-80 (FVSGGGKKPWRQKGTGRARAGSTRS) are disordered.

The protein belongs to the universal ribosomal protein uL4 family. As to quaternary structure, part of the 50S ribosomal subunit.

Functionally, one of the primary rRNA binding proteins, this protein initially binds near the 5'-end of the 23S rRNA. It is important during the early stages of 50S assembly. It makes multiple contacts with different domains of the 23S rRNA in the assembled 50S subunit and ribosome. In terms of biological role, forms part of the polypeptide exit tunnel. The polypeptide is Large ribosomal subunit protein uL4 (Solidesulfovibrio magneticus (strain ATCC 700980 / DSM 13731 / RS-1) (Desulfovibrio magneticus)).